Reading from the N-terminus, the 164-residue chain is Lipoprotein signal peptidase (164 aa).

3 helical membrane passes run 12–32 (WLWL…LILQ), 70–90 (WFFA…MYRS), and 102–122 (ALII…GFVV). Catalysis depends on residues D123 and D141. A helical transmembrane segment spans residues 137–157 (FNLADTAICVGAALIVLEGFL).

The protein belongs to the peptidase A8 family.

It is found in the cell inner membrane. The enzyme catalyses Release of signal peptides from bacterial membrane prolipoproteins. Hydrolyzes -Xaa-Yaa-Zaa-|-(S,diacylglyceryl)Cys-, in which Xaa is hydrophobic (preferably Leu), and Yaa (Ala or Ser) and Zaa (Gly or Ala) have small, neutral side chains.. The protein operates within protein modification; lipoprotein biosynthesis (signal peptide cleavage). This protein specifically catalyzes the removal of signal peptides from prolipoproteins. The protein is Lipoprotein signal peptidase of Shigella flexneri.